We begin with the raw amino-acid sequence, 419 residues long: Zinc finger protein Pegasus (419 aa).

Lys-5 is covalently cross-linked (Glycyl lysine isopeptide (Lys-Gly) (interchain with G-Cter in SUMO2)). 3 consecutive C2H2-type zinc fingers follow at residues 82–104, 110–132, and 138–161; these read LKCR…IRIH, HRCH…MRSH, and YKCE…RRKH. Lys-185 participates in a covalent cross-link: Glycyl lysine isopeptide (Lys-Gly) (interchain with G-Cter in SUMO2). A compositionally biased stretch (polar residues) spans 223-236; it reads QTDSYESMAKTTPT. 2 disordered regions span residues 223–245 and 288–356; these read QTDS…DPQE and MQQP…PTLP. Residues 289–311 are compositionally biased toward low complexity; sequence QQPSAQAVVSAVSASLPQSSSPA. Residues 332–349 are compositionally biased toward polar residues; it reads SEPSAHTSTPSMGNSQPS. 2 consecutive C2H2-type zinc fingers follow at residues 364–386 and 392–416; these read HHCQ…MGCH and FQCN…RGQH.

Belongs to the Ikaros C2H2-type zinc-finger protein family. Self-associates. Interacts with other family members; IKZF1, IKZF2, IKZF3 and IKZF4.

The protein localises to the nucleus. In terms of biological role, transcriptional repressor that binds the core 5'GNNTGTNG-3' DNA consensus sequence. Involved in megakaryocyte differentiation. The sequence is that of Zinc finger protein Pegasus (IKZF5) from Bos taurus (Bovine).